Here is a 322-residue protein sequence, read N- to C-terminus: Probable cAMP-dependent protein kinase catalytic subunit (322 aa).

Residues phenylalanine 7–phenylalanine 261 enclose the Protein kinase domain. Residues valine 13 to valine 21 and lysine 37 contribute to the ATP site. The active-site Proton acceptor is aspartate 132. The AGC-kinase C-terminal domain occupies lysine 262–leucine 322.

Belongs to the protein kinase superfamily. AGC Ser/Thr protein kinase family. cAMP subfamily.

The enzyme catalyses L-seryl-[protein] + ATP = O-phospho-L-seryl-[protein] + ADP + H(+). It catalyses the reaction L-threonyl-[protein] + ATP = O-phospho-L-threonyl-[protein] + ADP + H(+). The sequence is that of Probable cAMP-dependent protein kinase catalytic subunit from Encephalitozoon cuniculi (strain GB-M1) (Microsporidian parasite).